Here is a 1372-residue protein sequence, read N- to C-terminus: DNA-directed RNA polymerase subunit beta' (1372 aa).

Zn(2+) contacts are provided by cysteine 69, cysteine 71, cysteine 84, and cysteine 87. Mg(2+) contacts are provided by aspartate 460, aspartate 462, and aspartate 464. The Zn(2+) site is built by cysteine 808, cysteine 882, cysteine 889, and cysteine 892.

This sequence belongs to the RNA polymerase beta' chain family. As to quaternary structure, the RNAP catalytic core consists of 2 alpha, 1 beta, 1 beta' and 1 omega subunit. When a sigma factor is associated with the core the holoenzyme is formed, which can initiate transcription. It depends on Mg(2+) as a cofactor. Requires Zn(2+) as cofactor.

It carries out the reaction RNA(n) + a ribonucleoside 5'-triphosphate = RNA(n+1) + diphosphate. Functionally, DNA-dependent RNA polymerase catalyzes the transcription of DNA into RNA using the four ribonucleoside triphosphates as substrates. In Rickettsia akari (strain Hartford), this protein is DNA-directed RNA polymerase subunit beta'.